A 327-amino-acid polypeptide reads, in one-letter code: Malate dehydrogenase (327 aa).

NAD(+) is bound at residue 12-18 (GAAGQIA). Positions 93 and 99 each coordinate substrate. Residues Asn-106, Gln-113, and 130-132 (VGN) each bind NAD(+). Residues Asn-132 and Arg-163 each contribute to the substrate site. Catalysis depends on His-188, which acts as the Proton acceptor.

Belongs to the LDH/MDH superfamily. MDH type 2 family.

It catalyses the reaction (S)-malate + NAD(+) = oxaloacetate + NADH + H(+). Catalyzes the reversible oxidation of malate to oxaloacetate. This chain is Malate dehydrogenase, found in Acidiphilium cryptum (strain JF-5).